The sequence spans 336 residues: tRNA N6-adenosine threonylcarbamoyltransferase (336 aa).

The Fe cation site is built by histidine 114 and histidine 118. Residues 136–140 (LVSGG), aspartate 169, glycine 182, aspartate 186, and asparagine 275 contribute to the substrate site. Position 301 (aspartate 301) interacts with Fe cation.

The protein belongs to the KAE1 / TsaD family. The cofactor is Fe(2+).

Its subcellular location is the cytoplasm. It carries out the reaction L-threonylcarbamoyladenylate + adenosine(37) in tRNA = N(6)-L-threonylcarbamoyladenosine(37) in tRNA + AMP + H(+). Its function is as follows. Required for the formation of a threonylcarbamoyl group on adenosine at position 37 (t(6)A37) in tRNAs that read codons beginning with adenine. Is involved in the transfer of the threonylcarbamoyl moiety of threonylcarbamoyl-AMP (TC-AMP) to the N6 group of A37, together with TsaE and TsaB. TsaD likely plays a direct catalytic role in this reaction. This chain is tRNA N6-adenosine threonylcarbamoyltransferase, found in Streptococcus gordonii (strain Challis / ATCC 35105 / BCRC 15272 / CH1 / DL1 / V288).